Consider the following 396-residue polypeptide: Serine/threonine-protein kinase VRK1 (396 aa).

The Protein kinase domain occupies 37 to 317 (WKVGLPIGQG…LLDYTEKPLY (281 aa)). ATP contacts are provided by residues 43 to 51 (IGQGGFGCI) and lysine 71. Residue lysine 71 forms a Glycyl lysine isopeptide (Lys-Gly) (interchain with G-Cter in SUMO2) linkage. Residue aspartate 177 is the Proton acceptor of the active site. Serine 342 is modified (phosphoserine; by PLK3). A disordered region spans residues 354 to 396 (ITKKRKKEIEESKEPGVEDTEWSNTQTEEAIQTRSRTRKRVQK). Threonine 355 bears the Phosphothreonine; by autocatalysis mark. Positions 360-369 (KEIEESKEPG) are enriched in basic and acidic residues. The segment covering 375 to 387 (WSNTQTEEAIQTR) has biased composition (polar residues). Position 376 is a phosphoserine (serine 376). The residue at position 378 (threonine 378) is a Phosphothreonine. The required for interaction with the nucleosome stretch occupies residues 387 to 393 (RSRTRKR).

The protein belongs to the protein kinase superfamily. CK1 Ser/Thr protein kinase family. VRK subfamily. In terms of assembly, interacts with HDAC1, KAT2B, SETDB1, KDM3A and KDM4A. Associates with the nucleosome through interactions with nucleosome DNA, histone H2A and histone H2B; the interaction with H2A and H2B is mediated by the nucleosome acidic patch, a cluster of negatively charged residues of H2A and H2B forming a cleft within the nucleosome core. (Microbial infection) Interacts with vaccinia protein B12; this interaction inhibits the repressive activity of the vaccinia virus B12 pseudokinase on viral replication factory formation. Post-translationally, autophosphorylated at various serine and threonine residues. Autophosphorylation does not impair its ability to phosphorylate p53/TP53. Phosphorylation by PLK3 leads to induction of Golgi fragmentation during mitosis. Widely expressed. Highly expressed in fetal liver, testis and thymus.

Its subcellular location is the nucleus. The protein localises to the cytoplasm. The protein resides in the cajal body. The enzyme catalyses L-seryl-[protein] + ATP = O-phospho-L-seryl-[protein] + ADP + H(+). The catalysed reaction is L-threonyl-[protein] + ATP = O-phospho-L-threonyl-[protein] + ADP + H(+). Its activity is regulated as follows. Active in presence of Mn(2+), Mg(2+) and Zn(2+), but is not functional with Ca(2+) or Cu(2+). Has a higher affinity for Mn(2+) than for Mg(2+). RAN inhibits its autophosphorylation and its ability to phosphorylate histone H3. In terms of biological role, serine/threonine kinase involved in the regulation of key cellular processes including the cell cycle, nuclear condensation, transcription regulation, and DNA damage response. Controls chromatin organization and remodeling by mediating phosphorylation of histone H3 on 'Thr-4' and histone H2AX (H2aXT4ph). It also phosphorylates KAT5 in response to DNA damage, promoting KAT5 association with chromatin and histone acetyltransferase activity. Is involved in the regulation of cell cycle progression of neural progenitors, and is required for proper cortical neuronal migration. Is involved in neurite elongation and branching in motor neurons, and has an essential role in Cajal bodies assembly, acting through COIL phosphorylation and the control of coilin degradation. Involved in Golgi disassembly during the cell cycle: following phosphorylation by PLK3 during mitosis, it is required to induce Golgi fragmentation. Phosphorylates BANF1: disrupts its ability to bind DNA, reduces its binding to LEM domain-containing proteins and causes its relocalization from the nucleus to the cytoplasm. Phosphorylates TP53BP1 and p53/TP53 on 'Thr-18', preventing the interaction between p53/TP53 and MDM2. Phosphorylates ATF2 which activates its transcriptional activity. Phosphorylates JUN. This Homo sapiens (Human) protein is Serine/threonine-protein kinase VRK1.